The following is a 331-amino-acid chain: Ketol-acid reductoisomerase (NADP(+)) (331 aa).

The region spanning 2-182 (AQLFYDSDAD…GGTRAGILET (181 aa)) is the KARI N-terminal Rossmann domain. NADP(+) contacts are provided by residues 25–28 (YGSQ), S51, S53, and 83–86 (DEFQ). H108 is an active-site residue. G134 provides a ligand contact to NADP(+). In terms of domain architecture, KARI C-terminal knotted spans 183-328 (NFKEETETDL…KGLRSMFSWL (146 aa)). 4 residues coordinate Mg(2+): D191, E195, E227, and E231. Substrate is bound at residue S252.

Belongs to the ketol-acid reductoisomerase family. It depends on Mg(2+) as a cofactor.

It carries out the reaction (2R)-2,3-dihydroxy-3-methylbutanoate + NADP(+) = (2S)-2-acetolactate + NADPH + H(+). It catalyses the reaction (2R,3R)-2,3-dihydroxy-3-methylpentanoate + NADP(+) = (S)-2-ethyl-2-hydroxy-3-oxobutanoate + NADPH + H(+). It participates in amino-acid biosynthesis; L-isoleucine biosynthesis; L-isoleucine from 2-oxobutanoate: step 2/4. The protein operates within amino-acid biosynthesis; L-valine biosynthesis; L-valine from pyruvate: step 2/4. Its function is as follows. Involved in the biosynthesis of branched-chain amino acids (BCAA). Catalyzes an alkyl-migration followed by a ketol-acid reduction of (S)-2-acetolactate (S2AL) to yield (R)-2,3-dihydroxy-isovalerate. In the isomerase reaction, S2AL is rearranged via a Mg-dependent methyl migration to produce 3-hydroxy-3-methyl-2-ketobutyrate (HMKB). In the reductase reaction, this 2-ketoacid undergoes a metal-dependent reduction by NADPH to yield (R)-2,3-dihydroxy-isovalerate. This is Ketol-acid reductoisomerase (NADP(+)) from Synechococcus sp. (strain CC9311).